Here is a 419-residue protein sequence, read N- to C-terminus: UDP-N-acetylglucosamine 1-carboxyvinyltransferase (419 aa).

Position 22–23 (22–23) interacts with phosphoenolpyruvate; the sequence is KN. Arg91 serves as a coordination point for UDP-N-acetyl-alpha-D-glucosamine. Cys115 functions as the Proton donor in the catalytic mechanism. Cys115 is modified (2-(S-cysteinyl)pyruvic acid O-phosphothioketal). Residues 120–124, 160–163, Asp305, and Val327 each bind UDP-N-acetyl-alpha-D-glucosamine; these read RPVDL and KVSV.

This sequence belongs to the EPSP synthase family. MurA subfamily.

It is found in the cytoplasm. It carries out the reaction phosphoenolpyruvate + UDP-N-acetyl-alpha-D-glucosamine = UDP-N-acetyl-3-O-(1-carboxyvinyl)-alpha-D-glucosamine + phosphate. The protein operates within cell wall biogenesis; peptidoglycan biosynthesis. Its function is as follows. Cell wall formation. Adds enolpyruvyl to UDP-N-acetylglucosamine. This is UDP-N-acetylglucosamine 1-carboxyvinyltransferase from Shigella dysenteriae serotype 1 (strain Sd197).